A 682-amino-acid polypeptide reads, in one-letter code: NAD(+)--arginine ADP-ribosyltransferase (682 aa).

In terms of domain architecture, TR mART core spans 383 to 614 (KIIRRELRGY…KLIQAEVMTT (232 aa)). Residues arginine 478, serine 503, and glutamate 576 contribute to the active site.

Belongs to the Tevenvirinae NAD(+)--arginine ADP-ribosyltransferase family. Post-translationally, proteolytic cleavages at the N- and C-termini by the prohead core protein protease give rise to the mature enzyme.

The protein resides in the virion. It catalyses the reaction L-arginyl-[protein] + NAD(+) = N(omega)-(ADP-D-ribosyl)-L-arginyl-[protein] + nicotinamide + H(+). Functionally, ADP-ribosyltransferase that efficiently ADP-ribosylates one of the two alpha subunits of host RNA polymerase RPOA on an arginine located in the C-terminal region. ADP-ribosylation of RPOA alpha subunit enhances the transcription of viral early genes. Also ribosylates RPOA subunits beta, beta' and sigma 70 and performs an autoribosylation reaction. Additional in-vitro identified targets include proteins involved in either translation or cellular metabolism such as elongation factor-Tu or GroeL. Mono-ADP-ribosylates host MAZF which may inactivate the latter. This Escherichia coli (Bacteriophage T4) protein is NAD(+)--arginine ADP-ribosyltransferase (alt).